A 387-amino-acid polypeptide reads, in one-letter code: Solute carrier family 25 protein Shawn (387 aa).

Solcar repeat units follow at residues 37–156 (IRPL…FKAR), 179–263 (IPFL…LKSS), and 269–366 (PTFS…GKSF). 6 helical membrane passes run 43–63 (VASA…LDVI), 128–148 (LWSG…IYFV), 179–199 (IPFL…VTCV), 235–255 (LWRG…IYWT), 275–295 (FAAG…FDVV), and 337–357 (AIFS…AIMI).

The protein belongs to the mitochondrial carrier (TC 2.A.29) family.

The protein localises to the mitochondrion inner membrane. Functionally, mitochondrial transporter required for glutathione import into mitochondria. The chain is Solute carrier family 25 protein Shawn from Drosophila melanogaster (Fruit fly).